Here is a 204-residue protein sequence, read N- to C-terminus: Large ribosomal subunit protein bL25 (204 aa).

The tract at residues Met1–Leu23 is disordered.

Belongs to the bacterial ribosomal protein bL25 family. CTC subfamily. As to quaternary structure, part of the 50S ribosomal subunit; part of the 5S rRNA/L5/L18/L25 subcomplex. Contacts the 5S rRNA. Binds to the 5S rRNA independently of L5 and L18.

Its function is as follows. This is one of the proteins that binds to the 5S RNA in the ribosome where it forms part of the central protuberance. In Novosphingobium aromaticivorans (strain ATCC 700278 / DSM 12444 / CCUG 56034 / CIP 105152 / NBRC 16084 / F199), this protein is Large ribosomal subunit protein bL25.